We begin with the raw amino-acid sequence, 514 residues long: Threonine synthase (514 aa).

K117 carries the N6-(pyridoxal phosphate)lysine modification. Pyridoxal 5'-phosphate-binding residues include G270, N271, F272, and D274. 2 positions are modified to phosphoserine: S319 and S321. Pyridoxal 5'-phosphate is bound at residue T449.

Belongs to the threonine synthase family. Requires pyridoxal 5'-phosphate as cofactor.

It carries out the reaction O-phospho-L-homoserine + H2O = L-threonine + phosphate. It participates in amino-acid biosynthesis; L-threonine biosynthesis; L-threonine from L-aspartate: step 5/5. In terms of biological role, catalyzes the gamma-elimination of phosphate from L-phosphohomoserine and the beta-addition of water to produce L-threonine. This chain is Threonine synthase (thrc), found in Schizosaccharomyces pombe (strain 972 / ATCC 24843) (Fission yeast).